The following is a 223-amino-acid chain: Translation initiation factor 6 (223 aa).

Belongs to the eIF-6 family.

In terms of biological role, binds to the 50S ribosomal subunit and prevents its association with the 30S ribosomal subunit to form the 70S initiation complex. The polypeptide is Translation initiation factor 6 (Methanobrevibacter smithii (strain ATCC 35061 / DSM 861 / OCM 144 / PS)).